The primary structure comprises 611 residues: Threonine--tRNA ligase (611 aa).

The tract at residues 1 to 27 is disordered; that stretch reads MAGPEPEPVSSAAATTPAPSAPVVLPK. Low complexity predominate over residues 8–24; the sequence is PVSSAAATTPAPSAPVV. Positions 209 to 502 are catalytic; the sequence is DHRRIGKDLD…MTENYAGDYP (294 aa). Zn(2+) is bound by residues C302, H353, and H479.

It belongs to the class-II aminoacyl-tRNA synthetase family. Homodimer. Zn(2+) is required as a cofactor.

The protein resides in the cytoplasm. It carries out the reaction tRNA(Thr) + L-threonine + ATP = L-threonyl-tRNA(Thr) + AMP + diphosphate + H(+). Its function is as follows. Catalyzes the attachment of threonine to tRNA(Thr) in a two-step reaction: L-threonine is first activated by ATP to form Thr-AMP and then transferred to the acceptor end of tRNA(Thr). Also edits incorrectly charged L-seryl-tRNA(Thr). This chain is Threonine--tRNA ligase, found in Synechococcus sp. (strain CC9605).